The following is a 388-amino-acid chain: Chorismate synthase (388 aa).

NADP(+)-binding residues include Arg39 and Arg45. Residues 132–134 (RSS), 251–252 (NA), Gly296, 311–315 (KPIPT), and Arg337 each bind FMN.

Belongs to the chorismate synthase family. Homotetramer. FMNH2 is required as a cofactor.

It carries out the reaction 5-O-(1-carboxyvinyl)-3-phosphoshikimate = chorismate + phosphate. It functions in the pathway metabolic intermediate biosynthesis; chorismate biosynthesis; chorismate from D-erythrose 4-phosphate and phosphoenolpyruvate: step 7/7. Catalyzes the anti-1,4-elimination of the C-3 phosphate and the C-6 proR hydrogen from 5-enolpyruvylshikimate-3-phosphate (EPSP) to yield chorismate, which is the branch point compound that serves as the starting substrate for the three terminal pathways of aromatic amino acid biosynthesis. This reaction introduces a second double bond into the aromatic ring system. This chain is Chorismate synthase, found in Staphylococcus haemolyticus (strain JCSC1435).